A 2273-amino-acid chain; its full sequence is Retinal-specific phospholipid-transporting ATPase ABCA4 (2273 aa).

Residues 1 to 21 (MGFVRQIQLLLWKNWTLRKRQ) are Cytoplasmic-facing. The helical transmembrane segment at 22–42 (KIRFVVELVWPLSLFLVLIWL) threads the bilayer. The Extracellular segment spans residues 43 to 646 (RNANPLYSHH…MPYPCFVDDS (604 aa)). 2 disulfides stabilise this stretch: Cys-54–Cys-81 and Cys-75–Cys-324. N-linked (GlcNAc...) asparagine glycosylation occurs at Asn-98. Ser-336 and Asn-338 together coordinate Mg(2+). A disulfide bridge links Cys-370 with Cys-519. Asn-415, Asn-444, and Asn-504 each carry an N-linked (GlcNAc...) asparagine glycan. Residues Arg-587 and Arg-653 each contribute to the an N-all-trans-retinylidenephosphatidylethanolamine site. Intrachain disulfides connect Cys-641–Cys-1490, Cys-1444–Cys-1455, and Cys-1488–Cys-1502. A helical transmembrane segment spans residues 647–667 (FMIILNRCFPIFMVLAWIYSV). The Cytoplasmic segment spans residues 668-699 (SMTVKSIVLEKELRLKETLKNQGVSNAVIWCT). Residues 700-720 (WFLDSFSIMSMSIFLLTIFIM) traverse the membrane as a helical segment. Residues 721–730 (HGRILHYSDP) are Extracellular-facing. Residues 731-751 (FILFLFLLAFSTATIMLCFLL) form a helical membrane-spanning segment. Over 752–759 (STFFSKAS) the chain is Cytoplasmic. The chain crosses the membrane as a helical span at residues 760–780 (LAAACSGVIYFTLYLPHILCF). Residues 781 to 835 (AWQDRMTAELKKAVSLLSPVAFGFGTEYLVRFEEQGLGLQWSNIGNSPTEGDEFS) lie on the Extracellular side of the membrane. A helical transmembrane segment spans residues 836–856 (FLLSMQMMLLDAAVYGLLAWY). Residues 857–1376 (LDQVFPGDYG…IRSHKDFLAQ (520 aa)) lie on the Cytoplasmic side of the membrane. A disordered region spans residues 891–911 (ERALEKTEPLTEETEDPEHPE). Thr-901 is modified (phosphothreonine). One can recognise an ABC transporter 1 domain in the interval 929-1160 (VCVKNLVKIF…FGTGLYLTLV (232 aa)). 3 residues coordinate ATP: Phe-938, Gly-966, and Lys-969. Position 970 (Thr-970) interacts with Mg(2+). ATP is bound by residues Thr-971, Gln-1010, Lys-1054, Gly-1064, Gly-1065, and His-1118. Ser-1185 is subject to Phosphoserine. Residues 1284–1345 (PLFAGGAQQK…EPECPGPQLN (62 aa)) are disordered. Thr-1313 bears the Phosphothreonine mark. The residue at position 1317 (Ser-1317) is a Phosphoserine. Residues 1331–1340 (GQPPPEPECP) show a composition bias toward pro residues. A helical membrane pass occupies residues 1377 to 1397 (IVLPATFVFLALMLSIVIPPF). The Extracellular segment spans residues 1398-1727 (GEYPALTLHP…VSPTTYWVTN (330 aa)). N-linked (GlcNAc...) asparagine glycosylation occurs at Asn-1469. 3 N-linked (GlcNAc...) asparagine glycosylation sites follow: Asn-1529, Asn-1588, and Asn-1662. A helical membrane pass occupies residues 1728–1748 (FLWDIMNYSVSAGLVVGIFIG). The Cytoplasmic segment spans residues 1749–1759 (FQKKAYTSPEN). A helical transmembrane segment spans residues 1760 to 1780 (LPALVALLLLYGWAVIPMMYP). At 1781-1792 (ASFLFDVPSTAY) the chain is on the extracellular side. A helical transmembrane segment spans residues 1793–1813 (VALSCANLFIGINSSAITFIL). Topologically, residues 1814–1831 (ELFENNRTLLRFNAVLRK) are cytoplasmic. A helical transmembrane segment spans residues 1832–1852 (LLIVFPHFCLGRGLIDLALSQ). The Extracellular segment spans residues 1853–1873 (AVTDVYARFGEEHSANPFHWD). The chain crosses the membrane as a helical span at residues 1874-1894 (LIGKNLFAMVVEGVVYFLLTL). At 1895 to 2273 (LVQRHFFLSQ…AAGASRQAQD (379 aa)) the chain is on the cytoplasmic side. In terms of domain architecture, ABC transporter 2 spans 1938–2170 (LRLHELTKIY…FGDGYIVTMK (233 aa)). 6 residues coordinate ATP: Asn-1974, Gly-1975, Lys-1978, Thr-1979, Thr-1980, and Gly-2073. Residue Thr-1979 participates in Mg(2+) binding. The essential for ATP binding and ATPase activity stretch occupies residues 2244–2249 (VFVNFA).

Belongs to the ABC transporter superfamily. ABCA family. In terms of processing, proteolytic cleavage by trypsin leads to a 120-kDa N-terminal fragment and a 115-kDa C-terminal fragment that are linked through disulfide bonds. N-glycosylated. Post-translationally, phosphorylation is independent of light exposure and modulates ATPase activity. Retinal-specific. Seems to be exclusively found in the rims of rod photoreceptor cells.

It is found in the membrane. The protein resides in the endoplasmic reticulum. It localises to the cytoplasmic vesicle. The protein localises to the cell projection. Its subcellular location is the cilium. It is found in the photoreceptor outer segment. The enzyme catalyses an N-all-trans-retinylidenephosphatidylethanolamine(out) + ATP + H2O = an N-all-trans-retinylidenephosphatidylethanolamine(in) + ADP + phosphate + H(+). It carries out the reaction ATP + H2O + phospholipidSide 1 = ADP + phosphate + phospholipidSide 2.. It catalyses the reaction a 1,2-diacyl-sn-glycero-3-phosphoethanolamine(out) + ATP + H2O = a 1,2-diacyl-sn-glycero-3-phosphoethanolamine(in) + ADP + phosphate + H(+). The catalysed reaction is N-11-cis-retinylidenephosphatidylethanolamine(out) + ATP + H2O = N-11-cis-retinylidenephosphatidylethanolamine(in) + ADP + phosphate + H(+). The enzyme catalyses ATP + H2O = ADP + phosphate + H(+). Its activity is regulated as follows. ATPase activity is decreased by cholesterol and ceramide. Phospholipids translocase activity is highly reduced by berylium fluoride and aluminum floride. N-ethylmaleimide inhibits phospholipid translocase activity. In terms of biological role, flippase that catalyzes in an ATP-dependent manner the transport of retinal-phosphatidylethanolamine conjugates like 11-cis and all-trans isomers of N-retinylidene-phosphatidylethanolamine (N-Ret-PE) from the lumen to the cytoplasmic leaflet of photoreceptor outer segment disk membranes, where 11-cis-retinylidene-phosphatidylethanolamine is then isomerized to its all-trans isomer and reduced by RDH8 to produce all-trans-retinol. This transport activity ensures that all-trans-retinal generated from photoexcitation and 11-cis-retinal not needed for the regeneration of rhodopsin and cone opsins are effectively cleared from the photoreceptors, therefore preventing their accumulation and the formation of toxic bisretinoid. Displays ATPase activity in vitro in absence of retinal substrate. May display GTPase activity that is strongly influenced by the lipid environment and the presence of retinoid compounds. Binds the unprotonated form of N-retinylidene-phosphatidylethanolamine with high affinity in the absence of ATP, and ATP binding and hydrolysis induce a protein conformational change that causes N-retinylidene-phosphatidylethanolamine release. The chain is Retinal-specific phospholipid-transporting ATPase ABCA4 from Homo sapiens (Human).